A 61-amino-acid chain; its full sequence is Aerolysin regulatory protein (61 aa).

Residues Met-1–Glu-14 show a composition bias toward basic residues. Residues Met-1–Arg-61 form a disordered region. Residues Asp-51–Arg-61 are compositionally biased toward polar residues.

In terms of biological role, regulation of the expression of aerolysin. The chain is Aerolysin regulatory protein (aerC) from Aeromonas sobria.